A 171-amino-acid chain; its full sequence is Moubatin (171 aa).

An N-terminal signal peptide occupies residues 1 to 15 (MMLVLTTLIFSFSAS). Intrachain disulfides connect Cys23-Cys144, Cys55-Cys166, and Cys118-Cys145.

Belongs to the calycin superfamily. Lipocalin family. The N-terminus is blocked. As to expression, expressed in salivary glands.

Its subcellular location is the secreted. In terms of biological role, tick salivary platelet aggregation inhibitor that plays an important part in the anti-hemostatic strategy of ticks. Acts by scavenging thromboxane A2 (TXA2), a potent inducer of platelet aggregation and blood vessel constriction. As a consequence, is a specific inhibitor of collagen-induced platelet aggregation. In addition, it also acts as a potent inhibitor of TXA2-mediated vasoconstriction. Has also been found to bind leukotriene B4 (LTB4) (which also derives from arachidonic acid, as TXA2) with affinities in the nanomolar range. It does not interact with complement protein C5. The polypeptide is Moubatin (Ornithodoros moubata (Soft tick)).